We begin with the raw amino-acid sequence, 222 residues long: NADH dehydrogenase [ubiquinone] iron-sulfur protein 8-B, mitochondrial (222 aa).

4Fe-4S ferredoxin-type domains follow at residues 114 to 143 and 153 to 182; these read RRYP…IEAE and TRYD…EGPN. [4Fe-4S] cluster contacts are provided by Cys123, Cys126, Cys129, Cys133, Cys162, Cys165, Cys168, and Cys172.

It belongs to the complex I 23 kDa subunit family. In terms of assembly, complex I is composed of at least 49 different subunits. This is a component of the iron-sulfur (IP) fragment of the enzyme. [4Fe-4S] cluster serves as cofactor.

The protein resides in the mitochondrion. It catalyses the reaction a ubiquinone + NADH + 5 H(+)(in) = a ubiquinol + NAD(+) + 4 H(+)(out). Functionally, core subunit of the mitochondrial membrane respiratory chain NADH dehydrogenase (Complex I) that is believed to belong to the minimal assembly required for catalysis. Complex I functions in the transfer of electrons from NADH to the respiratory chain. The immediate electron acceptor for the enzyme is believed to be ubiquinone. May donate electrons to ubiquinone. In Arabidopsis thaliana (Mouse-ear cress), this protein is NADH dehydrogenase [ubiquinone] iron-sulfur protein 8-B, mitochondrial.